The sequence spans 121 residues: Small ribosomal subunit protein bS6 (121 aa).

The disordered stretch occupies residues 94 to 121 (KAETGPSAVMKRVEKEEARKSSQQETAA). Basic and acidic residues predominate over residues 104–115 (KRVEKEEARKSS).

Belongs to the bacterial ribosomal protein bS6 family.

Its function is as follows. Binds together with bS18 to 16S ribosomal RNA. In Leptothrix cholodnii (strain ATCC 51168 / LMG 8142 / SP-6) (Leptothrix discophora (strain SP-6)), this protein is Small ribosomal subunit protein bS6.